The primary structure comprises 1806 residues: Collagen alpha-1(XI) chain (1806 aa).

An N-terminal signal peptide occupies residues 1 to 35; sequence MEPWSSRWKTKRWLWDFTVTTLALTFLFQAREVRG. A propeptide spans 36–511 (N-terminal propeptide); sequence AAPVDVLKAL…DGSKGPTISA (476 aa). 2 cysteine pairs are disulfide-bonded: Cys-61/Cys-243 and Cys-182/Cys-236. The region spanning 71–243 is the Laminin G-like domain; it reads DTAYRVSKQA…DYCEHYSPDC (173 aa). Residues 230–419 are nonhelical region; sequence KAAYDYCEHY…DITETSINGH (190 aa). The tract at residues 420-508 is triple-helical region (interrupted); sequence GAYGEKGQKG…YGGDGSKGPT (89 aa). The disordered stretch occupies residues 439–508; the sequence is LVEGPPGPAG…YGGDGSKGPT (70 aa). One can recognise a Collagen-like 1 domain in the interval 442–490; sequence GPPGPAGPAGIMGPPGLQGPTGPPGDPGDRGPPGRPGLPGADGLPGPPG. 2 stretches are compositionally biased toward low complexity: residues 449-461 and 479-496; these read PAGIMGPPGLQGP and LPGADGLPGPPGTMLMLP. The segment at 509 to 511 is short nonhelical segment; it reads ISA. Residues 512-528 are telopeptide; that stretch reads QEAQAQAILQQARIALR. The disordered stretch occupies residues 528–1563; it reads RGPPGPMGLT…TRRHTEGMQA (1036 aa). Residues 529–1542 are triple-helical region; it reads GPPGPMGLTG…PGSPGPPGEV (1014 aa). Collagen-like domains are found at residues 532–586, 583–641, 616–674, and 643–699; these read GPMG…GADG, GADG…EIGP, GERG…VDGP, and GLPG…PGPQ. Gly residues-rich tracts occupy residues 541 to 550 and 583 to 592; these read GPVGGPGSSG and GADGGRGMPG. Allysine is present on Lys-612. The span at 641–662 shows a compositional bias: low complexity; the sequence is PRGLPGEAGPRGLLGPRGTPGA. Pro residues predominate over residues 699 to 710; that stretch reads QGLPGPQGPIGP. Positions 717-728 are enriched in low complexity; the sequence is QGKPGLAGLPGA. A compositionally biased stretch (basic and acidic residues) spans 807–816; the sequence is RGEDGPEGPK. Low complexity-rich tracts occupy residues 875 to 903, 918 to 927, 941 to 960, 971 to 981, 1032 to 1041, and 1058 to 1074; these read KPGPRGQRGPTGPRGSRGARGPTGKPGPK, RGPQGPQGPV, KDGLPGHPGQRGETGFQGKT, PQGPTGETGPI, RGLPGAQGAP, and SPGERGSAGTAGPIGLP. Over residues 1076–1085 the composition is skewed to pro residues; the sequence is RPGPQGPPGP. Residues 1086–1110 are compositionally biased toward low complexity; that stretch reads AGEKGAPGEKGPQGPAGRDGVQGPV. A compositionally biased stretch (gly residues) spans 1162-1171; the sequence is GIAGGDGEPG. 2 stretches are compositionally biased toward pro residues: residues 1218-1229 and 1343-1362; these read MGPPGPPGPRGP and QPGPPGPSGEAGPPGPPGKR. Composition is skewed to low complexity over residues 1385–1394 and 1419–1428; these read AEGPPGKTGP and QGLPGAAGQD. 3 consecutive Collagen-like domains span residues 1393–1450, 1429–1487, and 1483–1541; these read GPVG…GSKG, GPPG…AKGD, and GAKG…PPGE. Residues 1430 to 1439 show a composition bias toward pro residues; that stretch reads PPGPMGPPGL. Lys-1452 is modified (allysine). Low complexity predominate over residues 1455–1464; sequence PGLIGLIGPP. The segment covering 1483–1492 has biased composition (gly residues); it reads GAKGDGGIPG. Pro residues-rich tracts occupy residues 1493-1509 and 1530-1539; these read PAGPLGPPGPPGLPGPQ and PGPPGSPGPP. Residues 1543–1563 are nonhelical region (C-terminal); that stretch reads IQPLPILSSKKTRRHTEGMQA. Residues 1564 to 1806 constitute a propeptide, C-terminal propeptide; sequence DADDNILDYS…FEVGPVCFLG (243 aa). Positions 1577–1805 constitute a Fibrillar collagen NC1 domain; that stretch reads EEIFGSLNSL…GFEVGPVCFL (229 aa). Residues Cys-1607 and Cys-1639 are joined by a disulfide bond. Ca(2+) is bound by residues Asp-1625, Asn-1627, Gln-1628, Cys-1630, and Asp-1633. Residue Asn-1640 is glycosylated (N-linked (GlcNAc...) asparagine). Intrachain disulfides connect Cys-1648/Cys-1803 and Cys-1714/Cys-1757.

The protein belongs to the fibrillar collagen family. In terms of assembly, trimers composed of three different chains: alpha 1(XI), alpha 2(XI), and alpha 3(XI). Alpha 3(XI) is a post-translational modification of alpha 1(II). Alpha 1(V) can also be found instead of alpha 3(XI)=1(II). In terms of processing, prolines at the third position of the tripeptide repeating unit (G-X-Y) are hydroxylated in some or all of the chains. N-glycosylated. As to expression, cartilage, placenta and some tumor or virally transformed cell lines. Isoforms using exon IIA or IIB are found in the cartilage while isoforms using only exon IIB are found in the tendon.

The protein localises to the secreted. The protein resides in the extracellular space. Its subcellular location is the extracellular matrix. May play an important role in fibrillogenesis by controlling lateral growth of collagen II fibrils. The polypeptide is Collagen alpha-1(XI) chain (COL11A1) (Homo sapiens (Human)).